The chain runs to 453 residues: Cholecystokinin receptor (453 aa).

The Extracellular segment spans residues 1–64 (MESLRSLSNI…ILDRKKPSPS (64 aa)). Residues Asn-9, Asn-22, Asn-30, Asn-35, and Asn-39 are each glycosylated (N-linked (GlcNAc...) asparagine). A helical membrane pass occupies residues 65 to 94 (DLNLWVRIVMYSVIFLLSVFGNTLIIIVLV). The Cytoplasmic portion of the chain corresponds to 95–104 (MNKRLRTITN). A helical membrane pass occupies residues 105–131 (SFLLSLALSDLMVAVLCMPFTLIPNLM). At 132-142 (ENFIFGEVICR) the chain is on the extracellular side. Cys-141 and Cys-223 are joined by a disulfide. A helical transmembrane segment spans residues 143–164 (AAAYFMGLSVSVSTFNLVAISI). Residues 165-184 (ERYSAICNPLKSRVWQTRSH) are Cytoplasmic-facing. A helical transmembrane segment spans residues 185–205 (AYRVIAATWVLSSIIMIPYLV). The Extracellular segment spans residues 206–237 (YNKTVTFPMKDRRVGHQCRLVWPSKQVQQAWY). The chain crosses the membrane as a helical span at residues 238-261 (VLLLTILFFIPGVVMIVAYGLISR). At 262–343 (ELYRGIQFEM…KLMAKKRVIR (82 aa)) the chain is on the cytoplasmic side. The helical transmembrane segment at 344–364 (MLIVIVAMFFICWMPIFVANT) threads the bilayer. The Extracellular segment spans residues 365–379 (WKAFDELSAFNTLTG). A helical membrane pass occupies residues 380–403 (APISFIHLLSYTSACVNPLIYCFM). Cys-401 carries S-palmitoyl cysteine lipidation. Over 404–453 (NKRFRKAFLGTFSSCIKPCRNFRDTDEDIAATGASLSKFSYTTVSSLGPA) the chain is Cytoplasmic.

Belongs to the G-protein coupled receptor 1 family. Brain and stomach.

The protein resides in the cell membrane. In terms of biological role, receptor for cholecystokinin. This receptor mediates its action by association with G proteins that activate a phosphatidylinositol-calcium second messenger system. Has high affinity for CCK-8 and low affinities for gastrin-17-I, CCK-4, and unsulfated CCK-8. This chain is Cholecystokinin receptor (cckar), found in Xenopus laevis (African clawed frog).